A 601-amino-acid polypeptide reads, in one-letter code: Elongation factor 4 (601 aa).

Residues 5 to 187 (ENIRNFCIVA…AIITTFPPPK (183 aa)) enclose the tr-type G domain. GTP-binding positions include 17–22 (DHGKST) and 134–137 (NKID).

Belongs to the TRAFAC class translation factor GTPase superfamily. Classic translation factor GTPase family. LepA subfamily.

The protein resides in the cell inner membrane. It carries out the reaction GTP + H2O = GDP + phosphate + H(+). Functionally, required for accurate and efficient protein synthesis under certain stress conditions. May act as a fidelity factor of the translation reaction, by catalyzing a one-codon backward translocation of tRNAs on improperly translocated ribosomes. Back-translocation proceeds from a post-translocation (POST) complex to a pre-translocation (PRE) complex, thus giving elongation factor G a second chance to translocate the tRNAs correctly. Binds to ribosomes in a GTP-dependent manner. This Treponema denticola (strain ATCC 35405 / DSM 14222 / CIP 103919 / JCM 8153 / KCTC 15104) protein is Elongation factor 4.